A 200-amino-acid polypeptide reads, in one-letter code: dTTP/UTP pyrophosphatase (200 aa).

Catalysis depends on Asp-72, which acts as the Proton acceptor.

This sequence belongs to the Maf family. YhdE subfamily. It depends on a divalent metal cation as a cofactor.

The protein localises to the cytoplasm. It carries out the reaction dTTP + H2O = dTMP + diphosphate + H(+). The enzyme catalyses UTP + H2O = UMP + diphosphate + H(+). In terms of biological role, nucleoside triphosphate pyrophosphatase that hydrolyzes dTTP and UTP. May have a dual role in cell division arrest and in preventing the incorporation of modified nucleotides into cellular nucleic acids. The chain is dTTP/UTP pyrophosphatase from Pseudomonas syringae pv. syringae (strain B728a).